The primary structure comprises 102 residues: Large ribosomal subunit protein uL23c (102 aa).

The protein belongs to the universal ribosomal protein uL23 family. In terms of assembly, part of the 50S ribosomal subunit.

It is found in the plastid. The protein localises to the chloroplast. Binds to 23S rRNA. This Trieres chinensis (Marine centric diatom) protein is Large ribosomal subunit protein uL23c (rpl23).